Consider the following 365-residue polypeptide: Cytosolic 5'-nucleotidase 1A (365 aa).

The segment covering 1–11 has biased composition (basic and acidic residues); it reads MEPGQPREARE. The interval 1–23 is disordered; it reads MEPGQPREAREPGPGAETAAVPR. Catalysis depends on Asp-208, which acts as the Nucleophile.

The protein belongs to the 5'-nucleotidase type 3 family. Mg(2+) serves as cofactor.

The protein localises to the cytoplasm. The catalysed reaction is a ribonucleoside 5'-phosphate + H2O = a ribonucleoside + phosphate. It carries out the reaction a 2'-deoxyribonucleoside 5'-phosphate + H2O = a 2'-deoxyribonucleoside + phosphate. It catalyses the reaction IMP + H2O = inosine + phosphate. The enzyme catalyses AMP + H2O = adenosine + phosphate. The catalysed reaction is dCMP + H2O = 2'-deoxycytidine + phosphate. Activated by ADP. Its function is as follows. Catalyzes the hydrolysis of ribonucleotide and deoxyribonucleotide monophosphates, releasing inorganic phosphate and the corresponding nucleoside. AMP is the major substrate but can also hydrolyze dCMP and IMP. The polypeptide is Cytosolic 5'-nucleotidase 1A (Nt5c1a) (Mus musculus (Mouse)).